Here is a 463-residue protein sequence, read N- to C-terminus: MAKNTKLWGGRFEGTVEDWVERFGASISFDQKLAKFDVIGSLAHVQMLGQTGILSLEESEKIQVGLKELLEELEAGQLDFDIANEDIHMNMEVLLTEKIGPLAGKLHTARSRNDQVATDMHLYLKEQLGYVLDKLAHLKGVLLDLAENHVATIMPGYTHLQHAQPISFAYHLMAYYNMFQRDSERFEFNQKHTDLCPLGAAALAGTTFPIDRQLSSDLLEFKQPYTNSLDAVSDRDFILEFLSNASILMMHMSRFCEEMINWCSFEYQFITLSDTFTTGSSIMPQKKNPDMAELIRGKTGRVYGHLFGLLTVMKSLPLAYNKDLQEDKEGMFDTVETILNSLDVLAGMLSSLQVNKEKMQESTEKDFSNATELADYLAGKGLPFREAHEVVGRLVLDSIKSAKNLQDWTLEELQTYHSLITEDIYVYLQPKTAVQRRNSLGGTGFDQVEYQIAVAKKANEAKK.

Belongs to the lyase 1 family. Argininosuccinate lyase subfamily.

Its subcellular location is the cytoplasm. The catalysed reaction is 2-(N(omega)-L-arginino)succinate = fumarate + L-arginine. Its pathway is amino-acid biosynthesis; L-arginine biosynthesis; L-arginine from L-ornithine and carbamoyl phosphate: step 3/3. The sequence is that of Argininosuccinate lyase from Streptococcus pneumoniae (strain JJA).